A 447-amino-acid polypeptide reads, in one-letter code: Tubulin alpha chain (447 aa).

GTP is bound by residues Gln-11, Glu-71, Gly-144, Thr-145, Thr-179, Asn-206, and Asn-228. Glu-71 provides a ligand contact to Mg(2+). The active site involves Glu-254.

This sequence belongs to the tubulin family. As to quaternary structure, dimer of alpha and beta chains. A typical microtubule is a hollow water-filled tube with an outer diameter of 25 nm and an inner diameter of 15 nM. Alpha-beta heterodimers associate head-to-tail to form protofilaments running lengthwise along the microtubule wall with the beta-tubulin subunit facing the microtubule plus end conferring a structural polarity. Microtubules usually have 13 protofilaments but different protofilament numbers can be found in some organisms and specialized cells. The cofactor is Mg(2+).

The protein resides in the cytoplasm. The protein localises to the cytoskeleton. It catalyses the reaction GTP + H2O = GDP + phosphate + H(+). In terms of biological role, tubulin is the major constituent of microtubules, a cylinder consisting of laterally associated linear protofilaments composed of alpha- and beta-tubulin heterodimers. Microtubules grow by the addition of GTP-tubulin dimers to the microtubule end, where a stabilizing cap forms. Below the cap, tubulin dimers are in GDP-bound state, owing to GTPase activity of alpha-tubulin. This chain is Tubulin alpha chain (TUBA), found in Avena sativa (Oat).